We begin with the raw amino-acid sequence, 200 residues long: Ribosomal RNA large subunit methyltransferase E (200 aa).

The S-adenosyl-L-methionine site is built by Gly-49, Trp-51, Asp-69, Asp-87, and Asp-111. The active-site Proton acceptor is Lys-151.

The protein belongs to the class I-like SAM-binding methyltransferase superfamily. RNA methyltransferase RlmE family.

The protein resides in the cytoplasm. It catalyses the reaction uridine(2552) in 23S rRNA + S-adenosyl-L-methionine = 2'-O-methyluridine(2552) in 23S rRNA + S-adenosyl-L-homocysteine + H(+). In terms of biological role, specifically methylates the uridine in position 2552 of 23S rRNA at the 2'-O position of the ribose in the fully assembled 50S ribosomal subunit. In Lawsonia intracellularis (strain PHE/MN1-00), this protein is Ribosomal RNA large subunit methyltransferase E.